Reading from the N-terminus, the 60-residue chain is Cytotoxin 10 (60 aa).

4 cysteine pairs are disulfide-bonded: C3–C21, C14–C38, C42–C53, and C54–C59.

The protein belongs to the three-finger toxin family. Short-chain subfamily. Type IA cytotoxin sub-subfamily. In terms of assembly, monomer in solution; Homodimer and oligomer in the presence of negatively charged lipids forming a pore with a size ranging between 20 and 30 Angstroms. As to expression, expressed by the venom gland.

It localises to the secreted. Its subcellular location is the target cell membrane. Shows cytolytic activity on many different cells by forming pore in lipid membranes. In vivo, increases heart rate or kills the animal by cardiac arrest. In addition, it binds to heparin with high affinity, interacts with Kv channel-interacting protein 1 (KCNIP1) in a calcium-independent manner, and binds to integrin alpha-V/beta-3 (ITGAV/ITGB3) with moderate affinity. Has hemolytic activity towards human erythrocytes (EC(50)=0.162 uM) and cytolytic activity towards various cell lines. The sequence is that of Cytotoxin 10 from Naja naja (Indian cobra).